Consider the following 466-residue polypeptide: Probable ribonuclease FAU-1 (466 aa).

The S1 motif domain occupies 90–152; the sequence is GAIYAGTVTD…TDGRPVLDTT (63 aa).

This sequence belongs to the FAU-1 family.

Functionally, probable RNase involved in rRNA stability through maturation and/or degradation of precursor rRNAs. Binds to RNA in loop regions with AU-rich sequences. The protein is Probable ribonuclease FAU-1 of Haloarcula marismortui (strain ATCC 43049 / DSM 3752 / JCM 8966 / VKM B-1809) (Halobacterium marismortui).